The sequence spans 61 residues: Metallothionein-1H (61 aa).

An N-acetylmethionine modification is found at methionine 1. The tract at residues 1-29 is beta; it reads MDPNCSCEAGGSCACAGSCKCKKCKCTSC. The a divalent metal cation site is built by cysteine 5, cysteine 7, cysteine 13, cysteine 15, cysteine 19, cysteine 21, cysteine 24, cysteine 26, cysteine 29, cysteine 33, cysteine 34, cysteine 36, cysteine 37, cysteine 41, cysteine 44, cysteine 48, cysteine 50, and cysteine 57. Positions 30-61 are alpha; it reads KKSCCSCCPLGCAKCAQGCICKGASEKCSCCA. Position 58 is a phosphoserine (serine 58). A divalent metal cation-binding residues include cysteine 59 and cysteine 60.

The protein belongs to the metallothionein superfamily. Type 1 family. In terms of assembly, monomer.

Functionally, metallothioneins have a high content of cysteine residues that bind various heavy metals; these proteins are transcriptionally regulated by both heavy metals and glucocorticoids. The protein is Metallothionein-1H (MT1H) of Homo sapiens (Human).